A 508-amino-acid chain; its full sequence is Chromosomal replication initiator protein DnaA (508 aa).

The segment at 1-90 (MSVELWQQCV…RRSSAPRAAP (90 aa)) is domain I, interacts with DnaA modulators. Residues 91–171 (NAPVSAAVAA…QVEGALKHTS (81 aa)) are domain II. The tract at residues 130-160 (EVEEPSSRDSFDSMSDSGSVPAASGRTEQRT) is disordered. Residues 172-388 (YLNRTFTFET…GALKRVIAHS (217 aa)) are domain III, AAA+ region. Positions 216, 218, 219, and 220 each coordinate ATP. Residues 389-508 (HFMGRDITIE…YKNLLRTLTT (120 aa)) form a domain IV, binds dsDNA region.

Belongs to the DnaA family. As to quaternary structure, oligomerizes as a right-handed, spiral filament on DNA at oriC.

It localises to the cytoplasm. Plays an essential role in the initiation and regulation of chromosomal replication. ATP-DnaA binds to the origin of replication (oriC) to initiate formation of the DNA replication initiation complex once per cell cycle. Binds the DnaA box (a 9 base pair repeat at the origin) and separates the double-stranded (ds)DNA. Forms a right-handed helical filament on oriC DNA; dsDNA binds to the exterior of the filament while single-stranded (ss)DNA is stabiized in the filament's interior. The ATP-DnaA-oriC complex binds and stabilizes one strand of the AT-rich DNA unwinding element (DUE), permitting loading of DNA polymerase. After initiation quickly degrades to an ADP-DnaA complex that is not apt for DNA replication. Binds acidic phospholipids. The polypeptide is Chromosomal replication initiator protein DnaA (Pseudomonas entomophila (strain L48)).